Here is a 271-residue protein sequence, read N- to C-terminus: uncharacterized protein (271 aa).

Solcar repeat units follow at residues 3 to 74, 81 to 163, and 171 to 268; these read VQTL…AKRR, EGAI…SKKY, and DISV…FKSK. 6 helical membrane-spanning segments follow: residues 5-26, 49-69, 84-104, 138-158, 170-190, and 240-261; these read TLMA…IDTI, GLPI…STYV, ILYS…WTPL, GYWM…VCYE, WDIS…ATTI, and FTRG…SMSV.

The protein belongs to the mitochondrial carrier (TC 2.A.29) family.

The protein resides in the mitochondrion inner membrane. This is an uncharacterized protein from Schizosaccharomyces pombe (strain 972 / ATCC 24843) (Fission yeast).